We begin with the raw amino-acid sequence, 683 residues long: Pre-mRNA-splicing factor CLF1 (683 aa).

HAT repeat units lie at residues 40-72 (DWQRRKRSEFEEALKRNRLDVRQWLRYAAFEYE), 74-106 (RDMRRARSVFERALAVAPGDVVVWLRYVDCELR), 108-140 (RDVNHARNLLVRATALLPRVDKLWYKYVLMEES), 142-173 (GQVELVRGVYTKWCTLEPAAAAWDAFVDFETR), 175-206 (GQVEHVREVYSRYVMVHPVAATWLKWVAFERK), 291-323 (SILFKRKREYEEQLLAHPLDYDAWWLYLDLLEE), 336-367 (ATVKAVPRSQEKDMQWRKYVNLWLRYLLFLET), 374-407 (LTRSMYQKLVREVIPNTKFTFAKAWIMYAEFEIR), 409-440 (EKLDKARKILGMSLGMCPKPKLFQYYIDLEIK), 442-474 (KEFDRVRRLHEKLLEFQPDVLSNWIEYAELEEN), 476-513 (GDEDRARGIYEIGLTADGGLSQARQLQLMQRYIQFETD), 515-547 (SEFERARALYSRYVALSGYDPNVWISCALYESS), and 582-620 (ENKEQTRAIFEKALRHYTSEKDDEGRILVLQAYKDYESI).

Belongs to the crooked-neck family. As to quaternary structure, associated with the spliceosome.

It localises to the nucleus. Its function is as follows. Involved in pre-mRNA splicing and cell cycle progression. Required for the spliceosome assembly and initiation of the DNA replication. This chain is Pre-mRNA-splicing factor CLF1 (CLF1), found in Eremothecium gossypii (strain ATCC 10895 / CBS 109.51 / FGSC 9923 / NRRL Y-1056) (Yeast).